A 300-amino-acid polypeptide reads, in one-letter code: Ribosomal RNA small subunit methyltransferase H (300 aa).

Residues 35 to 37 (GGH), aspartate 55, phenylalanine 82, aspartate 100, and glutamine 107 contribute to the S-adenosyl-L-methionine site.

Belongs to the methyltransferase superfamily. RsmH family.

It is found in the cytoplasm. It carries out the reaction cytidine(1402) in 16S rRNA + S-adenosyl-L-methionine = N(4)-methylcytidine(1402) in 16S rRNA + S-adenosyl-L-homocysteine + H(+). Its function is as follows. Specifically methylates the N4 position of cytidine in position 1402 (C1402) of 16S rRNA. The polypeptide is Ribosomal RNA small subunit methyltransferase H (Chlamydia trachomatis serovar L2 (strain ATCC VR-902B / DSM 19102 / 434/Bu)).